The sequence spans 225 residues: Ribonuclease 3 (225 aa).

An RNase III domain is found at Ile5–Asp127. Residue Glu40 participates in Mg(2+) binding. Residue Asp44 is part of the active site. Positions 113 and 116 each coordinate Mg(2+). The active site involves Glu116. Positions Asp154–Asn224 constitute a DRBM domain.

This sequence belongs to the ribonuclease III family. As to quaternary structure, homodimer. The cofactor is Mg(2+).

The protein localises to the cytoplasm. The catalysed reaction is Endonucleolytic cleavage to 5'-phosphomonoester.. Digests double-stranded RNA. Involved in the processing of primary rRNA transcript to yield the immediate precursors to the large and small rRNAs (23S and 16S). Processes some mRNAs, and tRNAs when they are encoded in the rRNA operon. Processes pre-crRNA and tracrRNA of type II CRISPR loci if present in the organism. This is Ribonuclease 3 from Vibrio campbellii (strain ATCC BAA-1116).